A 550-amino-acid polypeptide reads, in one-letter code: T-complex protein 1 subunit eta (550 aa).

Residues 529–550 (SESANAGMMPPQGAGRGRGMPM) form a disordered region.

It belongs to the TCP-1 chaperonin family. In terms of assembly, heterooligomeric complex of about 850 to 900 kDa that forms two stacked rings, 12 to 16 nm in diameter.

It is found in the cytoplasm. In terms of biological role, molecular chaperone; assists the folding of proteins upon ATP hydrolysis. Known to play a role, in vitro, in the folding of actin and tubulin. In yeast may play a role in mitotic spindle formation. The protein is T-complex protein 1 subunit eta (CCT7) of Saccharomyces cerevisiae (strain ATCC 204508 / S288c) (Baker's yeast).